We begin with the raw amino-acid sequence, 300 residues long: MNFQGLVLTDNCKNQWVVGPLIGKGGFGSIYTTNDNNYVVKIEPKANGSLFTEQAFYTRVLKPSVIEEWKKSHHISHVGVITCKAFGLYKSINTEYRFLVINRLGVDLDAVIRANNNRLPKRSVMLVGIEILNTIQFMHEQGYSHGNIKASNIVLDQMDKNKLYLVDYGLVSKFMSNGEHVPFIRNPNKMDNGTLEFTPIDSHKGYVVSRRGDLETLGYCMIRWLGGILPWTKIAETKNCALVSATKQKYVNNTTTLLMTSLQYAPRELLQYITMVNSLTYFEEPNYDKFRHILMQGAYY.

The region spanning Trp-16 to Phe-282 is the Protein kinase domain. Residues Ile-22–Ile-30 and Lys-45 each bind ATP. Asn-147 functions as the Proton acceptor in the catalytic mechanism.

This sequence belongs to the protein kinase superfamily. Ser/Thr protein kinase family. Poxviruses subfamily. As to quaternary structure, interacts with host JIP1; this interaction increases the amount of MAPK bound to JIP1 and subsequently increases the activity of transcription factors, such as JUN, that respond to these complexes. Interacts with protein OPG198; this interaction inhibits the repressive activity of OPG198 pseudokinase on viral replication factory formation. Mg(2+) serves as cofactor. Post-translationally, autophosphorylated.

Its subcellular location is the virion. The protein localises to the host cytoplasm. It carries out the reaction L-seryl-[protein] + ATP = O-phospho-L-seryl-[protein] + ADP + H(+). The enzyme catalyses L-threonyl-[protein] + ATP = O-phospho-L-threonyl-[protein] + ADP + H(+). In terms of biological role, essential serine/threonine-protein kinase that plays different role in the viral life cycle. Phosphorylates the host small ribosomal protein RACK1 thereby customizing the ribosomes to a state optimal for viral mRNAs (which contain poly-A leaders) but not for host mRNAs. Facilitates viral DNA replication by inhibiting host BANF1, a cellular host defense responsive to foreign DNA. Phosphorylates host BANF1 on serine and threonine residues; this leads to BANF1 relocalization to the cytoplasm, loss of dimerization and impaired DNA binding activity. Indeed, BANF1 activity depends on its DNA-binding property which is blocked by VPK1-mediated phosphorylation. Required for viral intermediate genes expression, probably by inhibiting host BANF1. Modulates cellular responses via host JUN by two different mechanisms, either by direct phosphorylation or by modulation of upstream JIP1-MAPK complexes. Seems to participate in the accumulation/processing of late proteins and thus in virion maturation. In addition, inhibits B12 repressive activity on viral DNA replication via a phosphorylation-dependent mechanism. The chain is B1 kinase (OPG187) from Homo sapiens (Human).